The following is a 410-amino-acid chain: Putative odorant receptor 65c (410 aa).

The Cytoplasmic segment spans residues 1-59 (MDIRGNVHRFVKFYIDGWKHFRDPTMESSYSAVYYWREQMKAMFLYTTSKERQMPYRSS). A helical membrane pass occupies residues 60–80 (WHTLVIIQATVCFLTMCYGVT). Over 81-92 (ESLGDKVQMGRD) the chain is Extracellular. A helical transmembrane segment spans residues 93 to 113 (IAFIIGFFYIAFKIYYFQWYG). The Cytoplasmic portion of the chain corresponds to 114–148 (DELDEVVEALETFHPWAQKGPGAVDYRTAKRWYFT). Residues 149-169 (LAFFLASSWLVFLCIFILLLI) traverse the membrane as a helical segment. Over 170–222 (TSPLWVHQQILPLHAAFPFQWHEKSIHPISHAFIYLFQTWNVMYFLTWLVCIE) the chain is Extracellular. A helical transmembrane segment spans residues 223–243 (GLSVSIYVEITFAIEVLCLEL). Topologically, residues 244–279 (RHLHQRCHGYEQLRLETNRLVQFHQKIVHILDHTNK) are cytoplasmic. The chain crosses the membrane as a helical span at residues 280 to 300 (VFHGTLIMQMGVNFFLVSLSV). At 301–312 (LEAMEARKDPKV) the chain is on the extracellular side. A helical membrane pass occupies residues 313–333 (VAQFAVLMLLALGHLSMWSYF). Over 334–385 (GDLLSQKSLTISEAAYEAYDPIKGSKDVYRDLCLIIRRGQEPLIMRASPFPS) the chain is Cytoplasmic. The helical transmembrane segment at 386–406 (FNFINYSAILNQCYGILTFLL) threads the bilayer. Topologically, residues 407–410 (KTLD) are extracellular.

Belongs to the insect chemoreceptor superfamily. Heteromeric odorant receptor channel (TC 1.A.69) family. Or49a subfamily. Interacts with Orco. Complexes exist early in the endomembrane system in olfactory sensory neurons (OSNs), coupling these complexes to the conserved ciliary trafficking pathway.

The protein resides in the cell membrane. Odorant receptor which mediates acceptance or avoidance behavior, depending on its substrates. The odorant receptor repertoire encodes a large collection of odor stimuli that vary widely in identity, intensity, and duration. May form a complex with Orco to form odorant-sensing units, providing sensitive and prolonged odorant signaling and calcium permeability. This is Putative odorant receptor 65c (Or65c) from Drosophila melanogaster (Fruit fly).